Here is a 302-residue protein sequence, read N- to C-terminus: Sulfate adenylyltransferase subunit 2 (302 aa).

The protein belongs to the PAPS reductase family. CysD subfamily. As to quaternary structure, heterodimer composed of CysD, the smaller subunit, and CysN.

The enzyme catalyses sulfate + ATP + H(+) = adenosine 5'-phosphosulfate + diphosphate. Its pathway is sulfur metabolism; hydrogen sulfide biosynthesis; sulfite from sulfate: step 1/3. Its function is as follows. With CysN forms the ATP sulfurylase (ATPS) that catalyzes the adenylation of sulfate producing adenosine 5'-phosphosulfate (APS) and diphosphate, the first enzymatic step in sulfur assimilation pathway. APS synthesis involves the formation of a high-energy phosphoric-sulfuric acid anhydride bond driven by GTP hydrolysis by CysN coupled to ATP hydrolysis by CysD. The protein is Sulfate adenylyltransferase subunit 2 of Xanthomonas campestris pv. campestris (strain 8004).